Consider the following 286-residue polypeptide: Master replication protein (286 aa).

One can recognise a CRESS-DNA virus Rep endonuclease domain in the interval Ala2–Phe96. The RCR-1 signature appears at Met9–Ile12. 2 residues coordinate a divalent metal cation: Glu33 and His41. Residues His41–Gln43 carry the RCR-2 motif. The Nuclear localization signal signature appears at Arg50–Lys70. Residue Tyr79 is the For DNA cleavage activity of the active site. The RCR-3 signature appears at Tyr79 to Lys82. Asp84 lines the a divalent metal cation pocket. A Nuclear localization signal motif is present at residues Phe96–Asp102. Gly180–Thr188 is a binding site for ATP.

This sequence belongs to the nanoviridea/circoviridae replication-associated protein family. As to quaternary structure, homooligomer (Potential). Rep binds to repeated DNA motifs (iterons). The cofactor is Mg(2+). Mn(2+) serves as cofactor.

Its subcellular location is the host nucleus. The enzyme catalyses ATP + H2O = ADP + phosphate + H(+). Functionally, essential for the replication of all genomic viral ssDNA (trans-replication). The closed circular ssDNA genome is first converted to a superhelical dsDNA. Rep binds a specific hairpin at the genome origin of replication. Introduces an endonucleolytic nick within the conserved sequence 5'-A[GT]TATTAC-3' in the intergenic region of the genome, thereby initiating the rolling circle replication (RCR). Following cleavage, binds covalently to the 5'-phosphate of DNA as a tyrosyl ester. The cleavage gives rise to a free 3'-OH that serves as a primer for the cellular DNA polymerase. The polymerase synthesizes the (+) strand DNA by rolling circle mechanism. After one round of replication, a Rep-catalyzed nucleotidyl transfer reaction releases a circular single-stranded virus genome, thereby terminating the replication. Displays origin-specific DNA cleavage, nucleotidyl transferase, ATPase and helicase activities. This Musa (BBTV) protein is Master replication protein (DNA-R).